A 352-amino-acid chain; its full sequence is Ribosomal RNA large subunit methyltransferase M (352 aa).

Residues Ser-184, 217–220 (APGG), Asp-236, Asp-256, and Asp-272 contribute to the S-adenosyl-L-methionine site. The active-site Proton acceptor is Lys-301.

This sequence belongs to the class I-like SAM-binding methyltransferase superfamily. RNA methyltransferase RlmE family. RlmM subfamily. As to quaternary structure, monomer.

Its subcellular location is the cytoplasm. The catalysed reaction is cytidine(2498) in 23S rRNA + S-adenosyl-L-methionine = 2'-O-methylcytidine(2498) in 23S rRNA + S-adenosyl-L-homocysteine + H(+). Functionally, catalyzes the 2'-O-methylation at nucleotide C2498 in 23S rRNA. This chain is Ribosomal RNA large subunit methyltransferase M, found in Pseudomonas paraeruginosa (strain DSM 24068 / PA7) (Pseudomonas aeruginosa (strain PA7)).